Here is a 226-residue protein sequence, read N- to C-terminus: Ribonuclease 3 (226 aa).

In terms of domain architecture, RNase III spans 7 to 129 (DARLQQALGY…LFGAVFLDAG (123 aa)). Glu42 provides a ligand contact to Mg(2+). Asp46 is a catalytic residue. Mg(2+) is bound by residues Asp115 and Glu118. The active site involves Glu118. The DRBM domain occupies 156–226 (DPKTRLQEIL…ARQACAELQR (71 aa)).

This sequence belongs to the ribonuclease III family. In terms of assembly, homodimer. It depends on Mg(2+) as a cofactor.

It localises to the cytoplasm. It catalyses the reaction Endonucleolytic cleavage to 5'-phosphomonoester.. Digests double-stranded RNA. Involved in the processing of primary rRNA transcript to yield the immediate precursors to the large and small rRNAs (23S and 16S). Processes some mRNAs, and tRNAs when they are encoded in the rRNA operon. Processes pre-crRNA and tracrRNA of type II CRISPR loci if present in the organism. This Thiobacillus denitrificans (strain ATCC 25259 / T1) protein is Ribonuclease 3.